Here is a 330-residue protein sequence, read N- to C-terminus: Aspartate--ammonia ligase (330 aa).

It belongs to the class-II aminoacyl-tRNA synthetase family. AsnA subfamily.

Its subcellular location is the cytoplasm. It carries out the reaction L-aspartate + NH4(+) + ATP = L-asparagine + AMP + diphosphate + H(+). It participates in amino-acid biosynthesis; L-asparagine biosynthesis; L-asparagine from L-aspartate (ammonia route): step 1/1. This chain is Aspartate--ammonia ligase, found in Shigella flexneri serotype 5b (strain 8401).